The following is a 188-amino-acid chain: 3-hydroxyanthranilate 3,4-dioxygenase 2 (188 aa).

Arginine 46 is a binding site for O2. 3 residues coordinate Fe cation: histidine 50, glutamate 70, and histidine 108. Glutamate 70 contacts substrate. Arginine 112 and glutamate 122 together coordinate substrate.

The protein belongs to the 3-HAO family. Fe(2+) serves as cofactor.

It is found in the cytoplasm. The enzyme catalyses 3-hydroxyanthranilate + O2 = (2Z,4Z)-2-amino-3-carboxymuconate 6-semialdehyde. It functions in the pathway cofactor biosynthesis; NAD(+) biosynthesis; quinolinate from L-kynurenine: step 3/3. Its function is as follows. Catalyzes the oxidative ring opening of 3-hydroxyanthranilate to 2-amino-3-carboxymuconate semialdehyde, which spontaneously cyclizes to quinolinate. This is 3-hydroxyanthranilate 3,4-dioxygenase 2 (bna1-2) from Aspergillus fumigatus (strain CBS 144.89 / FGSC A1163 / CEA10) (Neosartorya fumigata).